A 287-amino-acid chain; its full sequence is Urease accessory protein UreD (287 aa).

Belongs to the UreD family. UreD, UreF and UreG form a complex that acts as a GTP-hydrolysis-dependent molecular chaperone, activating the urease apoprotein by helping to assemble the nickel containing metallocenter of UreC. The UreE protein probably delivers the nickel.

The protein resides in the cytoplasm. In terms of biological role, required for maturation of urease via the functional incorporation of the urease nickel metallocenter. This chain is Urease accessory protein UreD, found in Aliivibrio fischeri (strain ATCC 700601 / ES114) (Vibrio fischeri).